The chain runs to 484 residues: Poly(A) polymerase alpha-B (484 aa).

Positions 240 to 257 match the Nuclear localization signal 1 motif; the sequence is RKQLHQLLPSHVLPKKKK. Disordered regions lie at residues 276–314, 326–356, and 375–484; these read SVDSDNSMSVPSPTNATRTSPLNSTGLSQGNSPATPVSL, VPQNNSTENSGGSLNESIPETATHPAFSSTP, and KPVT…RLNR. Positions 392–407 match the Nuclear localization signal 2 motif; sequence KRTSSPTNEESPKKTK. Residues 423 to 441 are compositionally biased toward basic and acidic residues; the sequence is EQNKLEPEELKEVHSEEKS. Over residues 451-464 the composition is skewed to low complexity; sequence SSQRSSSTDLSDIS.

Belongs to the poly(A) polymerase family. Monomer.

Its subcellular location is the nucleus. The catalysed reaction is RNA(n) + ATP = RNA(n)-3'-adenine ribonucleotide + diphosphate. In terms of biological role, polymerase that creates the 3'-poly(A) tail of mRNA's. May acquire specificity through interaction with a cleavage and polyadenylation factor (CPSF). The chain is Poly(A) polymerase alpha-B (papola-b) from Xenopus laevis (African clawed frog).